Here is a 543-residue protein sequence, read N- to C-terminus: EH domain-containing protein 2 (543 aa).

Position 3 is a phosphoserine (serine 3). Residues 55–286 (FDGKPMVLVA…DLFRDIQGLP (232 aa)) form the Dynamin-type G domain. The tract at residues 65–72 (GQYSTGKT) is G1 motif. Residue 65–72 (GQYSTGKT) participates in ATP binding. The segment at 91–92 (EP) is G2 motif. The KPF loop; caveolar targeting signature appears at 120–122 (KPF). Positions 153-156 (DTPG) are G3 motif. Residues 219–222 (NKAD) form a G4 motif region. Lysine 220 serves as a coordination point for ATP. Position 243 (valine 243) is a region of interest, G5 motif. An ATP-binding site is contributed by tryptophan 258. The interval 320–340 (SVFGKENKKKQLILKLPVIFA) is mediates membrane-binding. Serine 438, serine 468, serine 470, serine 484, and serine 493 each carry phosphoserine. The EH domain occupies 449–537 (DKSKYDEIFY…RRLVPPSKRR (89 aa)). The EF-hand domain occupies 481–516 (LPNSVLGRIWKLSDVDRDGMLDDEEFALASHLIEAK). Ca(2+) contacts are provided by aspartate 494, aspartate 496, aspartate 498, methionine 500, and glutamate 505. Positions 523–543 (PANLPRRLVPPSKRRHKGSAE) are disordered. Residues 534 to 543 (SKRRHKGSAE) show a composition bias toward basic residues.

This sequence belongs to the TRAFAC class dynamin-like GTPase superfamily. Dynamin/Fzo/YdjA family. EHD subfamily. Homodimer and homooligomer. Interacts with EHD1. May also interact with EHD3 and EHD4. Interacts with MYOF. Interacts with EHBP1. Interacts with FER1L5 (via second C2 domain). Interacts with CAV1 in a cholesterol-dependent manner. Interacts (via EH domain) with PACSIN2 (via NPF motifs); this interaction probably stabilizes the caveolae. Highly expressed in heart and moderately expressed in placenta, lung, and skeletal muscle.

Its subcellular location is the cell membrane. It localises to the membrane. It is found in the caveola. The protein localises to the endosome membrane. The protein resides in the cytoplasm. Its subcellular location is the cytosol. The very low intrinsic ATPase activity is increased upon interaction with liposomes. Its function is as follows. ATP- and membrane-binding protein that controls membrane reorganization/tubulation upon ATP hydrolysis. Plays a role in membrane trafficking between the plasma membrane and endosomes. Important for the internalization of GLUT4. Required for fusion of myoblasts to skeletal muscle myotubes. Required for normal translocation of FER1L5 to the plasma membrane. Regulates the equilibrium between cell surface-associated and cell surface-dissociated caveolae by constraining caveolae at the cell membrane. This Homo sapiens (Human) protein is EH domain-containing protein 2.